The sequence spans 1038 residues: MTSSLQRPWRVPWLPWTILLVSTAAASQNQERLCAFKDPYQQDLGIGESRISHENGTILCSKGSTCYGLWEKSKGDINLVKQGCWSHIGDPQECHYEECVVTTTPPSIQNGTYRFCCCSTDLCNVNFTENFPPPDTTPLSPPHSFNRDETIIIALASVSVLAVLIVALCFGYRMLTGDRKQGLHSMNMMEAAASEPSLDLDNLKLLELIGRGRYGAVYKGSLDERPVAVKVFSFANRQNFINEKNIYRVPLMEHDNIARFIVGDERVTADGRMEYLLVMEYYPNGSLCKYLSLHTSDWVSSCRLAHSVTRGLAYLHTELPRGDHYKPAISHRDLNSRNVLVKNDGTCVISDFGLSMRLTGNRLVRPGEEDNAAISEVGTIRYMAPEVLEGAVNLRDCESALKQVDMYALGLIYWEIFMRCTDLFPGESVPEYQMAFQTEVGNHPTFEDMQVLVSREKQRPKFPEAWKENSLAVRSLKETIEDCWDQDAEARLTAQCAEERMAELMMIWERNKSVSPTVNPMSTAMQNERNLSHNRRVPKIGPYPDYSSSSYIEDSIHHTDSIVKNISSEHSMSSTPLTIGEKNRNSINYERQQAQARIPSPETSVTSLSTNTTTTNTTGLTPSTGMTTISEMPYPDETNLHTTNVAQSIGPTPVCLQLTEEDLETNKLDPKEVDKNLKESSDENLMEHSLKQFSGPDPLSSTSSSLLYPLIKLAVEATGQQDFTQTANGQACLIPDVLPTQIYPLPKQQNLPKRPTSLPLNTKNSTKEPRLKFGSKHKSNLKQVETGVAKMNTINAAEPHVVTVTMNGVAGRNHSVNSHAATTQYANGTVLSGQTTNIVTHRAQEMLQNQFIGEDTRLNINSSPDEHEPLLRREQQAGHDEGVLDRLVDRRERPLEGGRTNSNNNNSNPCSEQDVLAQGVPSTAADPGPSKPRRAQRPNSLDLSATNVLDGSSIQIGESTQDGKSGSGEKIKKRVKTPYSLKRWRPSTWVISTESLDCEVNNNGSNRAVHSKSSTAVYLAEGGTATTMVSKDIGMNCL.

An N-terminal signal peptide occupies residues 1 to 26; sequence MTSSLQRPWRVPWLPWTILLVSTAAA. Over 27 to 150 the chain is Extracellular; sequence SQNQERLCAF…PPHSFNRDET (124 aa). 5 disulfides stabilise this stretch: cysteine 34–cysteine 66, cysteine 60–cysteine 84, cysteine 94–cysteine 117, cysteine 99–cysteine 116, and cysteine 118–cysteine 123. Asparagine 55 carries N-linked (GlcNAc...) asparagine glycosylation. Asparagine 110 is a glycosylation site (N-linked (GlcNAc...) asparagine). N-linked (GlcNAc...) asparagine glycosylation is present at asparagine 126. The helical transmembrane segment at 151–171 threads the bilayer; sequence IIIALASVSVLAVLIVALCFG. At 172–1038 the chain is on the cytoplasmic side; sequence YRMLTGDRKQ…VSKDIGMNCL (867 aa). The region spanning 203–504 is the Protein kinase domain; sequence LKLLELIGRG…QCAEERMAEL (302 aa). ATP-binding positions include 209–217, lysine 230, and 280–282; these read IGRGRYGAV and EYY. Aspartate 333 functions as the Proton acceptor in the catalytic mechanism. ATP is bound by residues 337–338 and aspartate 351; that span reads RN. Threonine 379 is modified (phosphothreonine). Serine 586 bears the Phosphoserine mark. Positions 593 to 626 are disordered; sequence QAQARIPSPETSVTSLSTNTTTTNTTGLTPSTGM. Positions 603 to 626 are enriched in low complexity; that stretch reads TSVTSLSTNTTTTNTTGLTPSTGM. Phosphoserine occurs at positions 680 and 681. Disordered stretches follow at residues 746-770 and 872-972; these read PKQQ…KEPR and RREQ…EKIK. Residues 872–896 are compositionally biased toward basic and acidic residues; it reads RREQQAGHDEGVLDRLVDRRERPLE. Residues 937 to 964 are compositionally biased toward polar residues; sequence RPNSLDLSATNVLDGSSIQIGESTQDGK.

It belongs to the protein kinase superfamily. TKL Ser/Thr protein kinase family. TGFB receptor subfamily. In terms of assembly, interacts with GDF5. Interacts with BMP4. Interacts with SCUBE3. Interacts with TSC22D1/TSC-22. Interacts with activin A/INHBA. The cofactor is Mg(2+). Requires Mn(2+) as cofactor. In terms of tissue distribution, highly expressed in heart and liver.

The protein localises to the cell membrane. It catalyses the reaction L-threonyl-[receptor-protein] + ATP = O-phospho-L-threonyl-[receptor-protein] + ADP + H(+). It carries out the reaction L-seryl-[receptor-protein] + ATP = O-phospho-L-seryl-[receptor-protein] + ADP + H(+). On ligand binding, forms a receptor complex consisting of two type II and two type I transmembrane serine/threonine kinases. Type II receptors phosphorylate and activate type I receptors which autophosphorylate, then bind and activate SMAD transcriptional regulators. Can also mediate signaling through the activation of the p38MAPK cascade. Binds to BMP7, BMP2 and, less efficiently, BMP4. Binding is weak but enhanced by the presence of type I receptors for BMPs. Mediates induction of adipogenesis by GDF6. Promotes signaling also by binding to activin A/INHBA. The chain is Bone morphogenetic protein receptor type-2 (BMPR2) from Homo sapiens (Human).